Here is a 755-residue protein sequence, read N- to C-terminus: Polycomb protein SUZ12 (755 aa).

3 disordered regions span residues Lys26–Ser79, Asn333–Ala377, and Ala392–Arg420. Residues Lys30–Gln42 are compositionally biased toward low complexity. Polar residues-rich tracts occupy residues Thr43–Gly57 and Thr349–Thr359. The span at Gly411–Arg420 shows a compositional bias: basic and acidic residues. A C2H2-type zinc finger spans residues Phe436–His458. Residues Ile580–Ser645 are polycomb protein VEFS-Box.

Belongs to the VEFS (VRN2-EMF2-FIS2-SU(Z)12) family. In terms of assembly, component of the polycomb repressive complex 2 (PRC2) that consists of four core subunits icluding EZH2, EED, SUZ12, and RBBP4, among which EZH2 is the catalytic subunit and which minimally requires EED and SUZ12 for catalysis.

It localises to the nucleus. In terms of biological role, component of the of the Polycomb Repressive Complex 2 (PRC2), a histone H3 lysine methyltransferase responsible for generating mono-, di-, and tri-methylation on Lys27 (H3K27me1, H3K27me2 and H3K27me3). The tri-methylated form is known to be critical in gene repression, and its proper placement is essential in defining repression patterns during development. SUZ12 is not a catalytic subunit but is required for the complex regulation of histone H3 lysine methylation by EZH2. The sequence is that of Polycomb protein SUZ12 from Chaetomium thermophilum (strain DSM 1495 / CBS 144.50 / IMI 039719) (Thermochaetoides thermophila).